A 181-amino-acid polypeptide reads, in one-letter code: CDP-archaeol synthase (181 aa).

A run of 5 helical transmembrane segments spans residues 7–27 (VVWA…AVLA), 55–75 (LIGT…TPSV), 88–108 (LRAG…ASFL), 126–146 (LDFV…WFTE), and 147–167 (TFTL…HVVT).

This sequence belongs to the CDP-archaeol synthase family. Requires Mg(2+) as cofactor.

It is found in the cell membrane. The enzyme catalyses 2,3-bis-O-(geranylgeranyl)-sn-glycerol 1-phosphate + CTP + H(+) = CDP-2,3-bis-O-(geranylgeranyl)-sn-glycerol + diphosphate. It participates in membrane lipid metabolism; glycerophospholipid metabolism. In terms of biological role, catalyzes the formation of CDP-2,3-bis-(O-geranylgeranyl)-sn-glycerol (CDP-archaeol) from 2,3-bis-(O-geranylgeranyl)-sn-glycerol 1-phosphate (DGGGP) and CTP. This reaction is the third ether-bond-formation step in the biosynthesis of archaeal membrane lipids. This Haloarcula marismortui (strain ATCC 43049 / DSM 3752 / JCM 8966 / VKM B-1809) (Halobacterium marismortui) protein is CDP-archaeol synthase.